A 206-amino-acid polypeptide reads, in one-letter code: GTP cyclohydrolase 1 (206 aa).

Zn(2+) is bound by residues C95, H98, and C166.

The protein belongs to the GTP cyclohydrolase I family. In terms of assembly, toroid-shaped homodecamer, composed of two pentamers of five dimers.

The catalysed reaction is GTP + H2O = 7,8-dihydroneopterin 3'-triphosphate + formate + H(+). Its pathway is cofactor biosynthesis; 7,8-dihydroneopterin triphosphate biosynthesis; 7,8-dihydroneopterin triphosphate from GTP: step 1/1. The polypeptide is GTP cyclohydrolase 1 (Bartonella quintana (strain Toulouse) (Rochalimaea quintana)).